The sequence spans 259 residues: Eukaryotic translation initiation factor 3 subunit J (259 aa).

Positions 1 to 12 (MAAAAAAAAGDS) are enriched in low complexity. The tract at residues 1–70 (MAAAAAAAAG…KEEAEVKPEV (70 aa)) is sufficient for interaction with EIF3B. The tract at residues 1-111 (MAAAAAAAAG…EPEEPKVLTP (111 aa)) is disordered. Ser-12, Ser-14, and Ser-21 each carry phosphoserine. A compositionally biased stretch (acidic residues) spans 41–60 (EGEDEDEDVKDNWDDDDDEK). Positions 61–107 (KEEAEVKPEVKISEKKKIAEKIKEKERQQKKRQEEIKKRLEEPEEPK) are enriched in basic and acidic residues. Residues 71-136 (KISEKKKIAE…ESDLELAKET (66 aa)) are a coiled coil. A Glycyl lysine isopeptide (Lys-Gly) (interchain with G-Cter in SUMO2) cross-link involves residue Lys-107. Residue Thr-110 is modified to Phosphothreonine. Ser-128 carries the post-translational modification Phosphoserine. Positions 218 to 247 (SKAKKKKKGVVPGGGLKATMKDDLADYGGY) are disordered. The tract at residues 244 to 259 (YGGYDGGYVQDYEDFM) is promotes stable association with the 40S ribosome. A Phosphotyrosine modification is found at Tyr-255.

The protein belongs to the eIF-3 subunit J family. As to quaternary structure, component of the eukaryotic translation initiation factor 3 (eIF-3) complex, which is composed of 13 subunits: EIF3A, EIF3B, EIF3C, EIF3D, EIF3E, EIF3F, EIF3G, EIF3H, EIF3I, EIF3J, EIF3K, EIF3L and EIF3M. The eIF-3 complex appears to include 3 stable modules: module A is composed of EIF3A, EIF3B, EIF3G and EIF3I; module B is composed of EIF3F, EIF3H, and EIF3M; and module C is composed of EIF3C, EIF3D, EIF3E, EIF3K and EIF3L. EIF3C of module C binds EIF3B of module A and EIF3H of module B, thereby linking the three modules. EIF3J is a labile subunit that binds to the eIF-3 complex via EIF3B. The eIF-3 complex interacts with RPS6KB1 under conditions of nutrient depletion. Mitogenic stimulation leads to binding and activation of a complex composed of MTOR and RPTOR, leading to phosphorylation and release of RPS6KB1 and binding of EIF4B to eIF-3. In terms of processing, phosphorylated. Phosphorylation is enhanced upon serum stimulation.

The protein resides in the cytoplasm. In terms of biological role, component of the eukaryotic translation initiation factor 3 (eIF-3) complex, which is required for several steps in the initiation of protein synthesis. The eIF-3 complex associates with the 40S ribosome and facilitates the recruitment of eIF-1, eIF-1A, eIF-2:GTP:methionyl-tRNAi and eIF-5 to form the 43S pre-initiation complex (43S PIC). The eIF-3 complex stimulates mRNA recruitment to the 43S PIC and scanning of the mRNA for AUG recognition. The eIF-3 complex is also required for disassembly and recycling of post-termination ribosomal complexes and subsequently prevents premature joining of the 40S and 60S ribosomal subunits prior to initiation. The eIF-3 complex specifically targets and initiates translation of a subset of mRNAs involved in cell proliferation, including cell cycling, differentiation and apoptosis, and uses different modes of RNA stem-loop binding to exert either translational activation or repression. This subunit binds directly within the mRNA entry channel of the 40S ribosome to the aminoacyl (A) site. It may regulate the interaction between the 43S PIC and mRNA. This chain is Eukaryotic translation initiation factor 3 subunit J, found in Pongo abelii (Sumatran orangutan).